Here is a 61-residue protein sequence, read N- to C-terminus: Small ribosomal subunit protein uS14 (61 aa).

Cys24, Cys27, Cys40, and Cys43 together coordinate Zn(2+).

It belongs to the universal ribosomal protein uS14 family. Zinc-binding uS14 subfamily. As to quaternary structure, part of the 30S ribosomal subunit. Contacts proteins S3 and S10. Zn(2+) serves as cofactor.

Functionally, binds 16S rRNA, required for the assembly of 30S particles and may also be responsible for determining the conformation of the 16S rRNA at the A site. This is Small ribosomal subunit protein uS14 from Geobacillus stearothermophilus (Bacillus stearothermophilus).